We begin with the raw amino-acid sequence, 132 residues long: uncharacterized protein (132 aa).

This is an uncharacterized protein from Saccharomyces cerevisiae (strain ATCC 204508 / S288c) (Baker's yeast).